Consider the following 445-residue polypeptide: UPF0210 protein SPT_0285 (445 aa).

Belongs to the UPF0210 family. As to quaternary structure, homodimer.

This Streptococcus pneumoniae (strain Taiwan19F-14) protein is UPF0210 protein SPT_0285.